A 99-amino-acid chain; its full sequence is Gibberellin-regulated protein 2 (99 aa).

The signal sequence occupies residues 1–26; that stretch reads MAVFRSTLVLLLIIVCLTTYELHVHA.

It belongs to the GASA family. Six disulfide bonds may be present. As to expression, dry seeds and maturating siliques.

The protein resides in the secreted. Gibberellin-regulated protein that may function in hormonal controlled steps of development such as seed germination, flowering and seed maturation. The polypeptide is Gibberellin-regulated protein 2 (GASA2) (Arabidopsis thaliana (Mouse-ear cress)).